The sequence spans 248 residues: Granzyme B (248 aa).

A signal peptide spans 1–18 (MKLLLLLLSFSLAPKTEA). Positions 19 to 20 (GE) are cleaved as a propeptide — activation peptide. The Peptidase S1 domain occupies 21–246 (IIGGHEAKPH…FLSWIKKTMK (226 aa)). A disulfide bridge connects residues Cys50 and Cys66. Residues His65 and Asp109 each act as charge relay system in the active site. Cystine bridges form between Cys143–Cys210 and Cys174–Cys189. The active-site Charge relay system is the Ser204.

The protein belongs to the peptidase S1 family. Granzyme subfamily.

The protein resides in the secreted. It is found in the cytolytic granule. It catalyses the reaction Preferential cleavage: -Asp-|-Xaa- &gt;&gt; -Asn-|-Xaa- &gt; -Met-|-Xaa-, -Ser-|-Xaa-.. Inactivated by the serine protease inhibitor diisopropylfluorophosphate. Its function is as follows. Abundant protease in the cytosolic granules of cytotoxic T-cells and NK-cells which activates caspase-independent pyroptosis when delivered into the target cell through the immunological synapse. It cleaves after Asp. Once delivered into the target cell, acts by catalyzing cleavage of gasdermin-E (GSDME), releasing the pore-forming moiety of GSDME, thereby triggering pyroptosis and target cell death. Seems to be linked to an activation cascade of caspases (aspartate-specific cysteine proteases) responsible for apoptosis execution. Cleaves caspase-3 and -9 (CASP3 and CASP9, respectively) to give rise to active enzymes mediating apoptosis. Cleaves and activates CASP7 in response to bacterial infection, promoting plasma membrane repair. In Rattus norvegicus (Rat), this protein is Granzyme B (Gzmb).